The primary structure comprises 151 residues: Deoxyuridine 5'-triphosphate nucleotidohydrolase (151 aa).

Substrate-binding positions include 69-71 (RSG), Asn82, 86-88 (LID), and Met96.

Belongs to the dUTPase family. Requires Mg(2+) as cofactor.

It carries out the reaction dUTP + H2O = dUMP + diphosphate + H(+). It functions in the pathway pyrimidine metabolism; dUMP biosynthesis; dUMP from dCTP (dUTP route): step 2/2. In terms of biological role, this enzyme is involved in nucleotide metabolism: it produces dUMP, the immediate precursor of thymidine nucleotides and it decreases the intracellular concentration of dUTP so that uracil cannot be incorporated into DNA. This chain is Deoxyuridine 5'-triphosphate nucleotidohydrolase, found in Blochmanniella floridana.